The following is a 120-amino-acid chain: Purkinje cell protein 2 (120 aa).

2 consecutive GoLoco domains span residues 7–29 and 47–69; these read QEGF…RCSL and MDNL…RVTV. The segment at 16 to 120 is disordered; that stretch reads HVQGDRMEEQ…SSPQPQTQAP (105 aa). The span at 108 to 120 shows a compositional bias: polar residues; the sequence is RRNSSPQPQTQAP. Position 111 is a phosphoserine (S111).

Cerebellum (Purkinje cells) and retinal bipolar neurons.

May function as a cell-type specific modulator for G protein-mediated cell signaling. The protein is Purkinje cell protein 2 (Pcp2) of Mus musculus (Mouse).